A 156-amino-acid polypeptide reads, in one-letter code: Endoribonuclease YbeY (156 aa).

Positions 122, 126, and 132 each coordinate Zn(2+).

The protein belongs to the endoribonuclease YbeY family. The cofactor is Zn(2+).

The protein resides in the cytoplasm. Its function is as follows. Single strand-specific metallo-endoribonuclease involved in late-stage 70S ribosome quality control and in maturation of the 3' terminus of the 16S rRNA. The protein is Endoribonuclease YbeY of Symbiobacterium thermophilum (strain DSM 24528 / JCM 14929 / IAM 14863 / T).